Here is a 98-residue protein sequence, read N- to C-terminus: NADH-ubiquinone oxidoreductase chain 4L (98 aa).

A run of 3 helical transmembrane segments spans residues 1–21 (MMSI…GVLI), 28–48 (STLL…ALLI), and 59–79 (APLV…ALLV).

It belongs to the complex I subunit 4L family. Core subunit of respiratory chain NADH dehydrogenase (Complex I) which is composed of 45 different subunits.

The protein localises to the mitochondrion inner membrane. The enzyme catalyses a ubiquinone + NADH + 5 H(+)(in) = a ubiquinol + NAD(+) + 4 H(+)(out). Its function is as follows. Core subunit of the mitochondrial membrane respiratory chain NADH dehydrogenase (Complex I) which catalyzes electron transfer from NADH through the respiratory chain, using ubiquinone as an electron acceptor. Part of the enzyme membrane arm which is embedded in the lipid bilayer and involved in proton translocation. The polypeptide is NADH-ubiquinone oxidoreductase chain 4L (MT-ND4L) (Pseudocheirus peregrinus (Common ring-tailed possum)).